The sequence spans 1771 residues: Fatty acid synthase alpha subunit pkiB (1771 aa).

Over residues 108–130 the composition is skewed to polar residues; sequence SQPTQPQFEPTSPSHLTKRSPSP. The tract at residues 108–133 is disordered; sequence SQPTQPQFEPTSPSHLTKRSPSPSKA. The region spanning 143 to 221 is the Carrier domain; it reads ELTLQAGHVI…ESFQPEFSGI (79 aa). O-(pantetheine 4'-phosphoryl)serine is present on S181. A beta-ketoacyl reductase region spans residues 575-771; the sequence is HKAVLVTGAG…CGAVIGWTRG (197 aa). Positions 1011–1531 constitute a Ketosynthase family 3 (KS3) domain; it reads KELLHEVAVE…QKGAINIMVS (521 aa). Active-site for beta-ketoacyl synthase activity residues include C1197, H1416, and H1457. Residues D1650, V1651, and E1652 each contribute to the Mg(2+) site. Residues 1650-1652, Y1676, S1686, 1695-1705, 1719-1722, and 1753-1755 contribute to the acetyl-CoA site; these read DVE, EAAFKSLQTTS, EVGG, and ISH. 2 residues coordinate Mg(2+): S1754 and H1755.

Belongs to the thiolase-like superfamily. Fungal fatty acid synthetase subunit alpha family. As to quaternary structure, [Alpha(6)beta(6)] hexamers of two multifunctional subunits (alpha and beta).

The enzyme catalyses acetyl-CoA + n malonyl-CoA + 2n NADPH + 4n H(+) = a long-chain-acyl-CoA + n CoA + n CO2 + 2n NADP(+).. It carries out the reaction a fatty acyl-[ACP] + malonyl-[ACP] + H(+) = a 3-oxoacyl-[ACP] + holo-[ACP] + CO2. It catalyses the reaction a (3R)-hydroxyacyl-[ACP] + NADP(+) = a 3-oxoacyl-[ACP] + NADPH + H(+). It functions in the pathway secondary metabolite biosynthesis. Its function is as follows. Fatty acid synthase alpha subunit; part of the pki gene cluster that mediates the biosynthesis of 2,4-dihydroxy-3-methyl-6-(2-oxoundecyl)benzaldehyde. The first step in the pathway is the generation of the decanoyl starter unit by the FAS composed of subunits pkiB and pkiC, which is then transferred directly from the FAS to the SAT domain of the non-reducing polyketide synthase pkiA. PkiA condenses the decanoyyl starter unit with 4 malonyl-CoA units and performs one methylation step to yield 2,4-dihydroxy-3-methyl-6-(2-oxoundecyl)benzaldehyde. This chain is Fatty acid synthase alpha subunit pkiB, found in Emericella nidulans (strain FGSC A4 / ATCC 38163 / CBS 112.46 / NRRL 194 / M139) (Aspergillus nidulans).